Consider the following 290-residue polypeptide: 4-diphosphocytidyl-2-C-methyl-D-erythritol kinase (290 aa).

Lys8 is a catalytic residue. Residue Pro92 to Thr102 participates in ATP binding. Asp134 is an active-site residue.

This sequence belongs to the GHMP kinase family. IspE subfamily.

The enzyme catalyses 4-CDP-2-C-methyl-D-erythritol + ATP = 4-CDP-2-C-methyl-D-erythritol 2-phosphate + ADP + H(+). The protein operates within isoprenoid biosynthesis; isopentenyl diphosphate biosynthesis via DXP pathway; isopentenyl diphosphate from 1-deoxy-D-xylulose 5-phosphate: step 3/6. In terms of biological role, catalyzes the phosphorylation of the position 2 hydroxy group of 4-diphosphocytidyl-2C-methyl-D-erythritol. This chain is 4-diphosphocytidyl-2-C-methyl-D-erythritol kinase, found in Caldicellulosiruptor saccharolyticus (strain ATCC 43494 / DSM 8903 / Tp8T 6331).